We begin with the raw amino-acid sequence, 193 residues long: Phosphoheptose isomerase (193 aa).

Positions 37-193 constitute an SIS domain; the sequence is LADSFKAGGK…QLIEKEMVKA (157 aa). 52-54 contacts substrate; it reads NGG. His61 and Glu65 together coordinate Zn(2+). Substrate is bound by residues Glu65, 93 to 94, 119 to 121, Ser124, and Gln172; these read ND and STS. Zn(2+) contacts are provided by Gln172 and His180.

Belongs to the SIS family. GmhA subfamily. As to quaternary structure, homotetramer. Requires Zn(2+) as cofactor.

Its subcellular location is the cytoplasm. The enzyme catalyses 2 D-sedoheptulose 7-phosphate = D-glycero-alpha-D-manno-heptose 7-phosphate + D-glycero-beta-D-manno-heptose 7-phosphate. It functions in the pathway carbohydrate biosynthesis; D-glycero-D-manno-heptose 7-phosphate biosynthesis; D-glycero-alpha-D-manno-heptose 7-phosphate and D-glycero-beta-D-manno-heptose 7-phosphate from sedoheptulose 7-phosphate: step 1/1. Its function is as follows. Catalyzes the isomerization of sedoheptulose 7-phosphate in D-glycero-D-manno-heptose 7-phosphate. The sequence is that of Phosphoheptose isomerase from Serratia proteamaculans (strain 568).